A 327-amino-acid polypeptide reads, in one-letter code: MSHLAELVANAAAAINQASDVAALDNVRVEYLGKKGHLTLQMMTLRDLPPEERPAAGAVINAAKEQVQQALNARKAELESAALNARLAAETIDISLPGRRIENGGLHPVTRTIDRIESFFGELGFTVATGPEIEDDYHNFDALNIPGHHPARADHDTFWFDATRLLRTQTSGVQIRTMKAQQPPIRIIAPGRVYRNDYDQTHTPMFHQMEGLIVDTNISFTNLKGTLHDFLRNFFEEDLQIRFRPSYFPFTEPSAEVDVMGKNGKWLEVLGCGMVHPNVLRNVGIDPEIYSGFAFGMGMERLTMLRYGVTDLRSFFENDLRFLKQFK.

Residue glutamate 252 participates in Mg(2+) binding.

The protein belongs to the class-II aminoacyl-tRNA synthetase family. Phe-tRNA synthetase alpha subunit type 1 subfamily. In terms of assembly, tetramer of two alpha and two beta subunits. It depends on Mg(2+) as a cofactor.

It is found in the cytoplasm. It catalyses the reaction tRNA(Phe) + L-phenylalanine + ATP = L-phenylalanyl-tRNA(Phe) + AMP + diphosphate + H(+). The chain is Phenylalanine--tRNA ligase alpha subunit from Salmonella choleraesuis (strain SC-B67).